We begin with the raw amino-acid sequence, 127 residues long: Small ribosomal subunit protein uS11 (127 aa).

It belongs to the universal ribosomal protein uS11 family. In terms of assembly, part of the 30S ribosomal subunit. Interacts with proteins S7 and S18. Binds to IF-3.

Functionally, located on the platform of the 30S subunit, it bridges several disparate RNA helices of the 16S rRNA. Forms part of the Shine-Dalgarno cleft in the 70S ribosome. The chain is Small ribosomal subunit protein uS11 from Rickettsia felis (strain ATCC VR-1525 / URRWXCal2) (Rickettsia azadi).